Consider the following 750-residue polypeptide: Photosystem I P700 chlorophyll a apoprotein A1 (750 aa).

Transmembrane regions (helical) follow at residues 70-93 (VFSA…FHGA), 156-179 (LYCT…FHYH), 195-219 (LNHH…HVSL), 291-309 (IAHH…GHMY), 346-369 (WHAQ…HHMY), 385-411 (LSLF…IFMV), 433-455 (AIIS…LYIH), and 531-549 (FLVH…LILL). Cys-573 and Cys-582 together coordinate [4Fe-4S] cluster. Transmembrane regions (helical) follow at residues 589 to 610 (HVFL…HFSW) and 664 to 686 (LSAY…MFLF). His-675 provides a ligand contact to chlorophyll a'. Chlorophyll a-binding residues include Met-683 and Tyr-691. Trp-692 serves as a coordination point for phylloquinone. A helical membrane pass occupies residues 724–744 (AVGVTHYLLGGIATTWAFFLA).

It belongs to the PsaA/PsaB family. In terms of assembly, the PsaA/B heterodimer binds the P700 chlorophyll special pair and subsequent electron acceptors. PSI consists of a core antenna complex that captures photons, and an electron transfer chain that converts photonic excitation into a charge separation. The eukaryotic PSI reaction center is composed of at least 11 subunits. Requires P700 is a chlorophyll a/chlorophyll a' dimer, A0 is one or more chlorophyll a, A1 is one or both phylloquinones and FX is a shared 4Fe-4S iron-sulfur center. as cofactor.

The protein resides in the plastid. It localises to the chloroplast thylakoid membrane. It carries out the reaction reduced [plastocyanin] + hnu + oxidized [2Fe-2S]-[ferredoxin] = oxidized [plastocyanin] + reduced [2Fe-2S]-[ferredoxin]. PsaA and PsaB bind P700, the primary electron donor of photosystem I (PSI), as well as the electron acceptors A0, A1 and FX. PSI is a plastocyanin-ferredoxin oxidoreductase, converting photonic excitation into a charge separation, which transfers an electron from the donor P700 chlorophyll pair to the spectroscopically characterized acceptors A0, A1, FX, FA and FB in turn. Oxidized P700 is reduced on the lumenal side of the thylakoid membrane by plastocyanin. In Citrus sinensis (Sweet orange), this protein is Photosystem I P700 chlorophyll a apoprotein A1.